A 215-amino-acid polypeptide reads, in one-letter code: Large ribosomal subunit protein uL4 (215 aa).

The segment at 46–72 is disordered; the sequence is TAKSKNRAEVSGGGRKPWAQKGGGRAR. The segment covering 56 to 71 has biased composition (gly residues); the sequence is SGGGRKPWAQKGGGRA.

Belongs to the universal ribosomal protein uL4 family. In terms of assembly, part of the 50S ribosomal subunit.

One of the primary rRNA binding proteins, this protein initially binds near the 5'-end of the 23S rRNA. It is important during the early stages of 50S assembly. It makes multiple contacts with different domains of the 23S rRNA in the assembled 50S subunit and ribosome. Its function is as follows. Forms part of the polypeptide exit tunnel. The chain is Large ribosomal subunit protein uL4 from Helicobacter pylori (strain ATCC 700392 / 26695) (Campylobacter pylori).